The primary structure comprises 527 residues: UPF0053 protein YegH (527 aa).

The next 5 membrane-spanning stretches (helical) occupy residues 14 to 34, 51 to 71, 81 to 101, 145 to 165, and 185 to 205; these read ITLI…IAIL, LLLA…LVTL, FTFS…LFKA, ITAV…VIAI, and IVIL…AEGF. 2 CBS domains span residues 306-366 and 371-429; these read MTSR…GEPL and LIRQ…PNEV.

This sequence belongs to the UPF0053 family.

The protein resides in the cell membrane. The chain is UPF0053 protein YegH (yegH) from Escherichia coli (strain K12).